Here is a 115-residue protein sequence, read N- to C-terminus: Macrophage migration inhibitory factor (115 aa).

The active-site Proton acceptor; via imino nitrogen is Pro2. Residues Lys33 and Ile65 each coordinate substrate. An N6-acetyllysine; alternate modification is found at Lys78. Lys78 carries the N6-succinyllysine; alternate modification. Residue Asn98 coordinates substrate.

This sequence belongs to the MIF family. As to quaternary structure, homotrimer. Interacts with CXCR2 extracellular domain. Interacts with the CD74 extracellular domain, USO1, COPS5 and BNIPL.

It is found in the secreted. The protein localises to the cytoplasm. It catalyses the reaction 3-phenylpyruvate = enol-phenylpyruvate. The catalysed reaction is L-dopachrome = 5,6-dihydroxyindole-2-carboxylate. In terms of biological role, pro-inflammatory cytokine involved in the innate immune response to bacterial pathogens. The expression of MIF at sites of inflammation suggests a role as mediator in regulating the function of macrophages in host defense. Counteracts the anti-inflammatory activity of glucocorticoids. Has phenylpyruvate tautomerase and dopachrome tautomerase activity (in vitro), but the physiological substrate is not known. It is not clear whether the tautomerase activity has any physiological relevance, and whether it is important for cytokine activity. In Meriones unguiculatus (Mongolian jird), this protein is Macrophage migration inhibitory factor (MIF).